Reading from the N-terminus, the 174-residue chain is Large ribosomal subunit protein uL18 (174 aa).

The protein belongs to the universal ribosomal protein uL18 family. Part of the 50S ribosomal subunit. Contacts the 5S and 23S rRNAs.

Its function is as follows. This is one of the proteins that bind and probably mediate the attachment of the 5S RNA into the large ribosomal subunit, where it forms part of the central protuberance. The sequence is that of Large ribosomal subunit protein uL18 from Methanosarcina acetivorans (strain ATCC 35395 / DSM 2834 / JCM 12185 / C2A).